We begin with the raw amino-acid sequence, 557 residues long: TBCC domain-containing protein 1 (557 aa).

The C-CAP/cofactor C-like domain maps to Thr-290 to Leu-435.

Belongs to the TBCC family.

The protein localises to the cytoplasm. It localises to the cytoskeleton. Its subcellular location is the microtubule organizing center. It is found in the centrosome. The protein resides in the spindle pole. In terms of biological role, plays a role in the regulation of centrosome and Golgi apparatus positioning, with consequences on cell shape and cell migration. This chain is TBCC domain-containing protein 1 (TBCCD1), found in Homo sapiens (Human).